The chain runs to 658 residues: Protein teflon (658 aa).

Residues 33 to 56 (LYCHFCRDLFTQLPEFLRHLQSNH) form a C2H2-type 1 zinc finger. The interval 80-131 (DKAHEDAQSAGHNSSSGDSRSLMNSEDSRAIDGSEENSDNSPVKPEQIGKQN) is disordered. The segment covering 89–104 (AGHNSSSGDSRSLMNS) has biased composition (polar residues). 2 consecutive C2H2-type zinc fingers follow at residues 608 to 630 (YFCK…LISH) and 634 to 657 (FQCT…RNAH).

The protein belongs to the Teflon family.

It localises to the nucleus. The protein localises to the chromosome. Its function is as follows. Specifically required in males for proper segregation of autosomal bivalents at meiosis I. Expression is required in the male germ line prior to spermatocyte stage S4. May have a role as a bridging molecule maintaining adhesion to hold autosome bivalents together via heterochromatic connections. This is Protein teflon from Drosophila simulans (Fruit fly).